The primary structure comprises 261 residues: Small ribosomal subunit protein eS4 (261 aa).

The region spanning 42–104 (LPLVIFLRNR…TGEFFRLIYD (63 aa)) is the S4 RNA-binding domain.

Belongs to the eukaryotic ribosomal protein eS4 family.

This Carabus granulatus (Ground beetle) protein is Small ribosomal subunit protein eS4 (RpS4).